The sequence spans 411 residues: Serine hydroxymethyltransferase (411 aa).

120 to 122 (GHL) contacts (6S)-5,6,7,8-tetrahydrofolate. Position 225 is an N6-(pyridoxal phosphate)lysine (lysine 225). 350–352 (SPF) is a binding site for (6S)-5,6,7,8-tetrahydrofolate.

Belongs to the SHMT family. As to quaternary structure, homodimer. Pyridoxal 5'-phosphate serves as cofactor.

The protein resides in the cytoplasm. The enzyme catalyses (6R)-5,10-methylene-5,6,7,8-tetrahydrofolate + glycine + H2O = (6S)-5,6,7,8-tetrahydrofolate + L-serine. It participates in one-carbon metabolism; tetrahydrofolate interconversion. The protein operates within amino-acid biosynthesis; glycine biosynthesis; glycine from L-serine: step 1/1. Catalyzes the reversible interconversion of serine and glycine with tetrahydrofolate (THF) serving as the one-carbon carrier. This reaction serves as the major source of one-carbon groups required for the biosynthesis of purines, thymidylate, methionine, and other important biomolecules. Also exhibits THF-independent aldolase activity toward beta-hydroxyamino acids, producing glycine and aldehydes, via a retro-aldol mechanism. The sequence is that of Serine hydroxymethyltransferase from Lactobacillus johnsonii (strain CNCM I-12250 / La1 / NCC 533).